The primary structure comprises 68 residues: Large ribosomal subunit protein bL33c (68 aa).

It belongs to the bacterial ribosomal protein bL33 family.

The protein resides in the plastid. It localises to the chloroplast. The protein is Large ribosomal subunit protein bL33c of Pinus koraiensis (Korean pine).